The primary structure comprises 179 residues: Dual-action ribosomal maturation protein DarP (179 aa).

The protein belongs to the DarP family.

The protein resides in the cytoplasm. Functionally, member of a network of 50S ribosomal subunit biogenesis factors which assembles along the 30S-50S interface, preventing incorrect 23S rRNA structures from forming. Promotes peptidyl transferase center (PTC) maturation. In Photorhabdus laumondii subsp. laumondii (strain DSM 15139 / CIP 105565 / TT01) (Photorhabdus luminescens subsp. laumondii), this protein is Dual-action ribosomal maturation protein DarP.